We begin with the raw amino-acid sequence, 280 residues long: Shikimate dehydrogenase (NADP(+)) (280 aa).

Shikimate contacts are provided by residues 23–25 (SLS) and Thr70. The Proton acceptor role is filled by Lys74. Asn95 and Asp111 together coordinate shikimate. NADP(+) is bound by residues 135-139 (GSGGA), 158-163 (NRTISK), and Ile221. Tyr223 is a shikimate binding site. Gly247 lines the NADP(+) pocket.

The protein belongs to the shikimate dehydrogenase family. As to quaternary structure, homodimer.

It carries out the reaction shikimate + NADP(+) = 3-dehydroshikimate + NADPH + H(+). Its pathway is metabolic intermediate biosynthesis; chorismate biosynthesis; chorismate from D-erythrose 4-phosphate and phosphoenolpyruvate: step 4/7. Involved in the biosynthesis of the chorismate, which leads to the biosynthesis of aromatic amino acids. Catalyzes the reversible NADPH linked reduction of 3-dehydroshikimate (DHSA) to yield shikimate (SA). The polypeptide is Shikimate dehydrogenase (NADP(+)) (Buchnera aphidicola subsp. Cinara cedri (strain Cc)).